We begin with the raw amino-acid sequence, 219 residues long: ATP-dependent Clp protease proteolytic subunit (219 aa).

Ser101 functions as the Nucleophile in the catalytic mechanism. Residue His126 is part of the active site.

It belongs to the peptidase S14 family. In terms of assembly, component of the chloroplastic Clp protease core complex.

The protein resides in the plastid. The protein localises to the chloroplast stroma. It catalyses the reaction Hydrolysis of proteins to small peptides in the presence of ATP and magnesium. alpha-casein is the usual test substrate. In the absence of ATP, only oligopeptides shorter than five residues are hydrolyzed (such as succinyl-Leu-Tyr-|-NHMec, and Leu-Tyr-Leu-|-Tyr-Trp, in which cleavage of the -Tyr-|-Leu- and -Tyr-|-Trp bonds also occurs).. Its function is as follows. Cleaves peptides in various proteins in a process that requires ATP hydrolysis. Has a chymotrypsin-like activity. Plays a major role in the degradation of misfolded proteins. The sequence is that of ATP-dependent Clp protease proteolytic subunit from Chara vulgaris (Common stonewort).